Here is a 460-residue protein sequence, read N- to C-terminus: 5-hydroxytryptamine receptor 2C (460 aa).

The first 32 residues, 1–32 (MVNLGNAVRSLLMHLIGLLVWQFDISISPVAA), serve as a signal peptide directing secretion. Residues 33 to 56 (IVTDTFNSSDGGRLFQFPDGVQNW) lie on the Extracellular side of the membrane. A helical membrane pass occupies residues 57–81 (PALSIVVIIIMTIGGNILVIMAVSM). The Cytoplasmic portion of the chain corresponds to 82-87 (EKKLHN). Residues 88-112 (ATNYFLMSLAIADMLVGLLVMPLSL) form a helical membrane-spanning segment. Residues 113–129 (LAILYDYVWPLPRYLCP) are Extracellular-facing. The cysteines at positions 128 and 208 are disulfide-linked. Residues 130–152 (VWISLDVLFSTASIMHLCAISLD) traverse the membrane as a helical segment. Thr-140 serves as a coordination point for ergotamine. The short motif at 152–154 (DRY) is the DRY motif; important for ligand-induced conformation changes element. Residues 153 to 168 (RYVAIRNPIEHSRFNS) lie on the Cytoplasmic side of the membrane. Residues 169–190 (RTKAIMKIAIVWAISIGVSVPI) traverse the membrane as a helical segment. Over 191–214 (PVIGLRDESKVFVNNTTCVLNDPN) the chain is Extracellular. N-linked (GlcNAc...) asparagine glycosylation is found at Asn-204 and Asn-205. Position 210 (Leu-210) interacts with ergotamine. Residues 215–237 (FVLIGSFVAFFIPLTIMVITYFL) traverse the membrane as a helical segment. The Cytoplasmic portion of the chain corresponds to 238-313 (TIYVLRRQTL…AINNEKKASK (76 aa)). The segment at 276–301 (EEENAPNPNPDQKPRRKKKEKRPRGT) is disordered. Positions 289–299 (PRRKKKEKRPR) are enriched in basic residues. Residues 314-338 (VLGIVFFVFLIMWCPFFITNILSVL) traverse the membrane as a helical segment. An intrachain disulfide couples Cys-339 to Cys-343. Residues 339-349 (CGKACNQKLME) lie on the Extracellular side of the membrane. The helical transmembrane segment at 350-372 (KLLNVFVWIGYVCSGINPLVYTL) threads the bilayer. The NPxxY motif; important for ligand-induced conformation changes and signaling signature appears at 366–370 (NPLVY). The Cytoplasmic segment spans residues 373–460 (FNKIYRRAFS…NVVSERISSV (88 aa)). Residues 458-460 (SSV) carry the PDZ-binding motif.

It belongs to the G-protein coupled receptor 1 family. Interacts with MPDZ. Interacts with ARRB2. Interacts with MPP3; this interaction stabilizes the receptor at the plasma membrane and prevents the desensitization of the HTR2C receptor-mediated calcium response.

The protein resides in the cell membrane. Functionally, G-protein coupled receptor for 5-hydroxytryptamine (serotonin). Also functions as a receptor for various drugs and psychoactive substances, including ergot alkaloid derivatives, 1-2,5,-dimethoxy-4-iodophenyl-2-aminopropane (DOI) and lysergic acid diethylamide (LSD). Ligand binding causes a conformation change that triggers signaling via guanine nucleotide-binding proteins (G proteins) and modulates the activity of downstream effectors. HTR2C is coupled to G(q)/G(11) G alpha proteins and activates phospholipase C-beta, releasing diacylglycerol (DAG) and inositol 1,4,5-trisphosphate (IP3) second messengers that modulate the activity of phosphatidylinositol 3-kinase and promote the release of Ca(2+) ions from intracellular stores, respectively. Beta-arrestin family members inhibit signaling via G proteins and mediate activation of alternative signaling pathways. Regulates neuronal activity via the activation of short transient receptor potential calcium channels in the brain, and thereby modulates the activation of pro-opiomelanocortin neurons and the release of CRH that then regulates the release of corticosterone. Plays a role in the regulation of appetite and eating behavior, responses to anxiogenic stimuli and stress. Plays a role in insulin sensitivity and glucose homeostasis. In Rattus norvegicus (Rat), this protein is 5-hydroxytryptamine receptor 2C.